The chain runs to 493 residues: Dipeptide permease D (493 aa).

Residues 1 to 13 (MNKHASQPRAIYY) are Cytoplasmic-facing. Residues 14–34 (VVALQIWEYFSFYGMRALLIL) form a helical membrane-spanning segment. Topologically, residues 35–48 (YLTNQLKYNDTHAY) are periplasmic. The helical transmembrane segment at 49–69 (ELFSAYCSLVYVTPILGGFLA) threads the bilayer. Residues 70–77 (DKVLGNRM) lie on the Cytoplasmic side of the membrane. A helical membrane pass occupies residues 78–98 (AVMLGALLMAIGHVVLGASEI). Over 99 to 100 (HP) the chain is Periplasmic. A helical membrane pass occupies residues 101–121 (SFLYLSLAIIVCGYGLFKSNV). The Cytoplasmic segment spans residues 122-137 (SCLLGELYEPTDPRRD). The chain crosses the membrane as a helical span at residues 138-158 (GGFSLMYAAGNVGSIIAPIAC). Residues 159–166 (GYAQEEYS) are Periplasmic-facing. A helical membrane pass occupies residues 167–187 (WAMGFGLAAVGMIAGLVIFLC). The Cytoplasmic portion of the chain corresponds to 188–211 (GNRHFTHTRGVNKKVLRATNFLLP). A helical membrane pass occupies residues 212–232 (NWGWLLVLLVATPALITVLFW). The Periplasmic segment spans residues 233-234 (KE). Residues 235 to 255 (WSVYALIVATIIGLGVLAKIY) form a helical membrane-spanning segment. The Cytoplasmic portion of the chain corresponds to 256–268 (RKAENQKQRKELR). A helical membrane pass occupies residues 269–289 (LIVTLTFFSMLFWAFAQQGGS). Over 290–311 (SISLYIDRFVNRDMFGYTVPTA) the chain is Periplasmic. The chain crosses the membrane as a helical span at residues 312 to 332 (MFQSINAFAVMLCGVFLAWVV). The Cytoplasmic segment spans residues 333–343 (KESVAGNRTVR). The helical transmembrane segment at 344–364 (IWGKFALGLGLMSAGFCILTL) threads the bilayer. At 365-378 (SARWSAMYGHSSLP) the chain is on the periplasmic side. Residues 379-399 (LMVLGLAVMGFAELFIDPVAM) form a helical membrane-spanning segment. Topologically, residues 400–412 (SQITRIEIPGVTG) are cytoplasmic. The chain crosses the membrane as a helical span at residues 413–433 (VLTGIYMLLSGAIANYLAGVI). At 434 to 461 (ADQTSQASFDASGAINYSINAYIEVFDQ) the chain is on the periplasmic side. A helical transmembrane segment spans residues 462–482 (ITWGALACVGVVLMIWLYQAL). Over 483 to 493 (KFRNRALALES) the chain is Cytoplasmic.

Belongs to the major facilitator superfamily. Proton-dependent oligopeptide transporter (POT/PTR) (TC 2.A.17) family. DtpD subfamily. In terms of assembly, monomer in solution. Exhibits a doughnut-like shape with a central, shallow depression and has a diameter of 8 nm.

The protein localises to the cell inner membrane. In terms of biological role, probable proton-dependent permease that transports dipeptides. The chain is Dipeptide permease D (dtpD) from Escherichia coli O157:H7.